A 371-amino-acid chain; its full sequence is Putative RING finger protein ORF117 (371 aa).

The RING-type zinc-finger motif lies at Cys72–Asn108. A compositionally biased stretch (acidic residues) spans Glu178–Val192. Positions Glu178–Pro218 are disordered.

This chain is Putative RING finger protein ORF117, found in Magallana gigas (Pacific oyster).